We begin with the raw amino-acid sequence, 673 residues long: UvrABC system protein B (673 aa).

Residues 26–183 (EGLEDGLAHQ…RRLAELQYTR (158 aa)) enclose the Helicase ATP-binding domain. 39–46 (GVTGSGKT) provides a ligand contact to ATP. The Beta-hairpin motif lies at 92–115 (YYDYYQPEAYVPSSDTFIEKDASV). The Helicase C-terminal domain occupies 431–597 (QVDDLLSEIR…GLNKKVVDIL (167 aa)). One can recognise a UVR domain in the interval 633 to 668 (QQKIHELEGQMMQHAQNLEFEEAAQIRDQLHQLREL).

This sequence belongs to the UvrB family. Forms a heterotetramer with UvrA during the search for lesions. Interacts with UvrC in an incision complex.

The protein resides in the cytoplasm. Its function is as follows. The UvrABC repair system catalyzes the recognition and processing of DNA lesions. A damage recognition complex composed of 2 UvrA and 2 UvrB subunits scans DNA for abnormalities. Upon binding of the UvrA(2)B(2) complex to a putative damaged site, the DNA wraps around one UvrB monomer. DNA wrap is dependent on ATP binding by UvrB and probably causes local melting of the DNA helix, facilitating insertion of UvrB beta-hairpin between the DNA strands. Then UvrB probes one DNA strand for the presence of a lesion. If a lesion is found the UvrA subunits dissociate and the UvrB-DNA preincision complex is formed. This complex is subsequently bound by UvrC and the second UvrB is released. If no lesion is found, the DNA wraps around the other UvrB subunit that will check the other stand for damage. The polypeptide is UvrABC system protein B (Salmonella agona (strain SL483)).